A 328-amino-acid polypeptide reads, in one-letter code: Phosphate acyltransferase (328 aa).

This sequence belongs to the PlsX family. In terms of assembly, homodimer. Probably interacts with PlsY.

It is found in the cytoplasm. The enzyme catalyses a fatty acyl-[ACP] + phosphate = an acyl phosphate + holo-[ACP]. The protein operates within lipid metabolism; phospholipid metabolism. Its function is as follows. Catalyzes the reversible formation of acyl-phosphate (acyl-PO(4)) from acyl-[acyl-carrier-protein] (acyl-ACP). This enzyme utilizes acyl-ACP as fatty acyl donor, but not acyl-CoA. This Campylobacter jejuni (strain RM1221) protein is Phosphate acyltransferase.